The sequence spans 198 residues: tRNA (cytidine(56)-2'-O)-methyltransferase (198 aa).

S-adenosyl-L-methionine contacts are provided by residues leucine 81, 110 to 114, and 128 to 135; these read GAEKV and IGNQPHSE. A disordered region spans residues 178–198; the sequence is DAKQAEASGEGASRKNGQLPS.

Belongs to the aTrm56 family. In terms of assembly, homodimer.

It is found in the cytoplasm. It carries out the reaction cytidine(56) in tRNA + S-adenosyl-L-methionine = 2'-O-methylcytidine(56) in tRNA + S-adenosyl-L-homocysteine + H(+). Its function is as follows. Specifically catalyzes the AdoMet-dependent 2'-O-ribose methylation of cytidine at position 56 in tRNAs. This is tRNA (cytidine(56)-2'-O)-methyltransferase from Pyrococcus abyssi (strain GE5 / Orsay).